A 400-amino-acid polypeptide reads, in one-letter code: Subtilisin-like protease CPC735_047380 (400 aa).

The first 19 residues, 1-19, serve as a signal peptide directing secretion; sequence MARINVVVSFLAALAVVQA. Residues 20–118 constitute a propeptide that is removed on maturation; sequence AQLLNLDGQK…IEPQRTFRAF (99 aa). The region spanning 35–116 is the Inhibitor I9 domain; sequence SYVVVMNDGL…NYIEPQRTFR (82 aa). In terms of domain architecture, Peptidase S8 spans 128-400; that stretch reads SWGLGRISHT…DKLLYNGSGQ (273 aa). Residue N153 is glycosylated (N-linked (GlcNAc...) asparagine). Catalysis depends on charge relay system residues D160 and H191. N-linked (GlcNAc...) asparagine glycans are attached at residues N244 and N252. Residue S346 is the Charge relay system of the active site. The N-linked (GlcNAc...) asparagine glycan is linked to N396.

The protein belongs to the peptidase S8 family.

It is found in the secreted. Functionally, secreted subtilisin-like serine protease with keratinolytic activity that contributes to pathogenicity. This Coccidioides posadasii (strain C735) (Valley fever fungus) protein is Subtilisin-like protease CPC735_047380.